Consider the following 172-residue polypeptide: Protein sym-1 (172 aa).

Transmembrane regions (helical) follow at residues 13-33, 52-72, 94-114, 128-148, and 152-172; these read PLLT…VAAQ, MVLY…RFLQ, GLFA…LEGT, LSTN…VVPL, and VLFV…LNGQ.

This sequence belongs to the peroxisomal membrane protein PXMP2/4 family.

Its subcellular location is the mitochondrion inner membrane. In terms of biological role, may be involved in cellular response to stress. Required to maintain mitochondrial DNA (mtDNA) integrity and stability. The chain is Protein sym-1 (sym-1) from Neurospora crassa (strain ATCC 24698 / 74-OR23-1A / CBS 708.71 / DSM 1257 / FGSC 987).